The sequence spans 382 residues: MNPLQTSTWQNQAPSFWLLRFSFIWLVSQKCCTASAVWTAYMNISFHVGNRMLSELGETGVFGRSSILKRVAGVVVPPEGKIQNACDPNTTFILPRNKEPWIALIERGGCAFTQKIKVASEHGARGVIIYNFPGTGNQVFPMSHQAFEDIVVVMIGNIKGMEILHLIRKGVHVTVMVEVGRKHVIWLNHYFVSFMIVTTATLAYFTFYHIRRLWVARIENRRWKRLTRELKKAFGQLQVRVLKEGDEEVNPNADSCVICFEAYKPNEIVRILTCKHFFHKNCIDPWILAHGTCPMCKCDILKALGIQMDIEDGTDSLQVLMSNELPGTLSPVEEETNYELPPARTSSKVTHVQEHPTSSANAGSQPPEAEETSHPSHGQQVL.

The PA domain maps to 65–167 (SSILKRVAGV…IKGMEILHLI (103 aa)). The chain crosses the membrane as a helical span at residues 190–210 (YFVSFMIVTTATLAYFTFYHI). Residues 256–297 (CVICFEAYKPNEIVRILTCKHFFHKNCIDPWILAHGTCPMCK) form an RING-type; atypical zinc finger. The interval 328–382 (TLSPVEEETNYELPPARTSSKVTHVQEHPTSSANAGSQPPEAEETSHPSHGQQVL) is disordered. Polar residues predominate over residues 344 to 364 (RTSSKVTHVQEHPTSSANAGS).

As to quaternary structure, interacts with E3 ligase UBE2J1. In terms of processing, auto-ubiquitinated. As to expression, expression is testis-specific.

The protein resides in the endoplasmic reticulum membrane. The catalysed reaction is S-ubiquitinyl-[E2 ubiquitin-conjugating enzyme]-L-cysteine + [acceptor protein]-L-lysine = [E2 ubiquitin-conjugating enzyme]-L-cysteine + N(6)-ubiquitinyl-[acceptor protein]-L-lysine.. Its pathway is protein modification; protein ubiquitination. In terms of biological role, has E3 ubiquitin-protein ligase activity. Plays a role in male fecundity through the interaction with the E2 ubituitin-protein ligase UBE2J1. The sequence is that of E3 ubiquitin-protein ligase RNF133 (Rnf133) from Mus musculus (Mouse).